The primary structure comprises 120 residues: Large ribosomal subunit protein bL12 (120 aa).

Belongs to the bacterial ribosomal protein bL12 family. Homodimer. Part of the ribosomal stalk of the 50S ribosomal subunit. Forms a multimeric L10(L12)X complex, where L10 forms an elongated spine to which 2 to 4 L12 dimers bind in a sequential fashion. Binds GTP-bound translation factors.

Functionally, forms part of the ribosomal stalk which helps the ribosome interact with GTP-bound translation factors. Is thus essential for accurate translation. The polypeptide is Large ribosomal subunit protein bL12 (Lactobacillus gasseri (strain ATCC 33323 / DSM 20243 / BCRC 14619 / CIP 102991 / JCM 1131 / KCTC 3163 / NCIMB 11718 / NCTC 13722 / AM63)).